A 100-amino-acid polypeptide reads, in one-letter code: Large ribosomal subunit protein uL23 (100 aa).

It belongs to the universal ribosomal protein uL23 family. In terms of assembly, part of the 50S ribosomal subunit. Contacts protein L29, and trigger factor when it is bound to the ribosome.

In terms of biological role, one of the early assembly proteins it binds 23S rRNA. One of the proteins that surrounds the polypeptide exit tunnel on the outside of the ribosome. Forms the main docking site for trigger factor binding to the ribosome. This Prochlorococcus marinus (strain MIT 9515) protein is Large ribosomal subunit protein uL23.